The sequence spans 374 residues: Glutamate 5-kinase (374 aa).

Lysine 16 lines the ATP pocket. Substrate-binding residues include serine 56, aspartate 143, and asparagine 155. Threonine 175 to aspartate 176 lines the ATP pocket. One can recognise a PUA domain in the interval lysine 282–valine 360.

This sequence belongs to the glutamate 5-kinase family.

It is found in the cytoplasm. The catalysed reaction is L-glutamate + ATP = L-glutamyl 5-phosphate + ADP. Its pathway is amino-acid biosynthesis; L-proline biosynthesis; L-glutamate 5-semialdehyde from L-glutamate: step 1/2. Functionally, catalyzes the transfer of a phosphate group to glutamate to form L-glutamate 5-phosphate. This Methylococcus capsulatus (strain ATCC 33009 / NCIMB 11132 / Bath) protein is Glutamate 5-kinase.